The following is a 145-amino-acid chain: uncharacterized protein (145 aa).

This is an uncharacterized protein from Bacillus subtilis (strain 168).